We begin with the raw amino-acid sequence, 341 residues long: Ferrochelatase (341 aa).

H189 and E293 together coordinate Fe cation.

Belongs to the ferrochelatase family.

It localises to the cytoplasm. It carries out the reaction heme b + 2 H(+) = protoporphyrin IX + Fe(2+). Its pathway is porphyrin-containing compound metabolism; protoheme biosynthesis; protoheme from protoporphyrin-IX: step 1/1. In terms of biological role, catalyzes the ferrous insertion into protoporphyrin IX. In Stutzerimonas stutzeri (strain A1501) (Pseudomonas stutzeri), this protein is Ferrochelatase.